We begin with the raw amino-acid sequence, 224 residues long: UPF0758 protein RSc2444 (224 aa).

One can recognise an MPN domain in the interval 102–224 (TLESPQSVKD…VYSFLEHGKM (123 aa)). Zn(2+) is bound by residues H173, H175, and D186. Residues 173 to 186 (HNHPTGHVEPSESD) carry the JAMM motif motif.

It belongs to the UPF0758 family.

This is UPF0758 protein RSc2444 from Ralstonia nicotianae (strain ATCC BAA-1114 / GMI1000) (Ralstonia solanacearum).